The following is a 503-amino-acid chain: MIKQTHVSNSSNNSTNSTAAQVPEMRRVKRIHFVGIGGAGMGGIAEVLLNEGYQISGSDIGENQVVKRLRALGATIVIGHQAENVVQASVIVVSTAINSENPELVKAKELRIPVVRRAEMLAELMRFRHGIAIAGTHGKTTTTSLIASIFAQGKLDPTFVIGGLLNSAGTNARLGSSRYLVAEADESDASFLHLQPMVSVITNIDADHMETYQGDFEKLKDTYIEFLHNLPFYGLAVVCIDNPVVRELLPRISRQVITYGFSKDADVRAVNYQQNGAVSHFTVEVEGQEPLEMSVNLPGQHNVLNALAGVAVAKDEGVNDEAICKALTEFEGIGRRFEKLTDFSTAAGDMVLVDDYGHHPSEVKATILAMRQGWPDKRLVMVFQPHRYSRTRDLYEDFVEVLSEVDCLFLLDVYAAGETPISSADSKSLARSIRLRGQIEPVYVSDVDKLPQLLATQLQDNDMVITQGAGSIGAVARNLADHSLLHTRCSVQPDAQSEVKGDK.

The tract at residues 1–22 is disordered; sequence MIKQTHVSNSSNNSTNSTAAQV. Positions 8-18 are enriched in low complexity; it reads SNSSNNSTNST. Residue 135–141 participates in ATP binding; the sequence is GTHGKTT.

Belongs to the MurCDEF family.

It localises to the cytoplasm. The enzyme catalyses UDP-N-acetyl-alpha-D-muramate + L-alanine + ATP = UDP-N-acetyl-alpha-D-muramoyl-L-alanine + ADP + phosphate + H(+). The protein operates within cell wall biogenesis; peptidoglycan biosynthesis. Its function is as follows. Cell wall formation. The sequence is that of UDP-N-acetylmuramate--L-alanine ligase from Colwellia psychrerythraea (strain 34H / ATCC BAA-681) (Vibrio psychroerythus).